The sequence spans 330 residues: DNA-directed RNA polymerase subunit alpha (330 aa).

Positions 1–236 (MQGSVTEFLK…EQLDAFVDLR (236 aa)) are alpha N-terminal domain (alpha-NTD). The interval 250 to 330 (FDPILLRPVD…NWPPASIAED (81 aa)) is alpha C-terminal domain (alpha-CTD).

It belongs to the RNA polymerase alpha chain family. In terms of assembly, homodimer. The RNAP catalytic core consists of 2 alpha, 1 beta, 1 beta' and 1 omega subunit. When a sigma factor is associated with the core the holoenzyme is formed, which can initiate transcription.

The catalysed reaction is RNA(n) + a ribonucleoside 5'-triphosphate = RNA(n+1) + diphosphate. In terms of biological role, DNA-dependent RNA polymerase catalyzes the transcription of DNA into RNA using the four ribonucleoside triphosphates as substrates. The chain is DNA-directed RNA polymerase subunit alpha from Vibrio campbellii (strain ATCC BAA-1116).